The following is a 752-amino-acid chain: MAISSTERRSKNVQVFVEKDAVETSFAKWAQPGHFSRTLAKGPKTTTWIWNLHADAHDFDSQTSSLEEVSRKIFSAHFGQLAIIFLWISGMHFHGAYFSNYSAWLTDPISIKQSSQVVWPIVGQEILNADVGGNFQGIQTTSGWFQMWRAEGITSEVELYWTAIGGLAMSAIMLFAGWFHYHKAAPKLEWFQNAESMMNHHLAGLLGLGCLSWSGHQIHIALPINKLLDAGVSPQEIPLPHEFLINRDLMAQLYPSFSKGLAPFFGGNWGEYSDFLTFKGGLNPVTGGLWLSDIAHHHLALSVLFIIAGHMYRTNWGIGHNMKEILEAHKGPFTGEGHKGLYEILTTSWHAQLAINLAMMGSLSIIVAHHMYAMPPYPYLATDYATQLSLFTHHMWIGGFCVVGGAAHGAIFMVRDYTPANNYNNLLDRVLRHRDAIISHLNWVCIFLGCHAFGFYIHNDTMRALGRPQDMFSDKAIQLQPIFAQWIQNIHLLAPGTTAPNALATTSYAFGGDVIEVGGKIAMMPIKLGTADFMVHHIHAFTIHVTVLILLKGVLYARSSKLIPDKANLGFRFPCDGPGRGGTCQSSSWDHVFLGLFWMYNSISVVIFHFSWKMQSDVWGTITPDGAISHITGGNFAQSSITINGWLRDFLWSQASQVIQSYGSASSAYGLIFLGAHFIWAFSLMFLFSGRGYWQELIESIVWAHNKLNFAPTIQPRALSITQGRAVGLAHYLLGGIGTTWAFFLARAISIT.

The next 8 membrane-spanning stretches (helical) occupy residues 73–96, 159–182, 198–222, 294–312, 349–372, 388–414, 436–458, and 533–551; these read IFSAHFGQLAIIFLWISGMHFHGA, LYWTAIGGLAMSAIMLFAGWFHYH, MNHHLAGLLGLGCLSWSGHQIHIAL, IAHHHLALSVLFIIAGHMY, WHAQLAINLAMMGSLSIIVAHHMY, LSLFTHHMWIGGFCVVGGAAHGAIFMV, AIISHLNWVCIFLGCHAFGFYIH, and FMVHHIHAFTIHVTVLILL. Residues cysteine 575 and cysteine 584 each contribute to the [4Fe-4S] cluster site. The next 2 membrane-spanning stretches (helical) occupy residues 591–612 and 666–688; these read HVFLGLFWMYNSISVVIFHFSW and SSAYGLIFLGAHFIWAFSLMFLF. Residue histidine 677 participates in chlorophyll a' binding. The chlorophyll a site is built by methionine 685 and tyrosine 693. Tryptophan 694 serves as a coordination point for phylloquinone. The chain crosses the membrane as a helical span at residues 726–746; sequence AVGLAHYLLGGIGTTWAFFLA.

This sequence belongs to the PsaA/PsaB family. The PsaA/B heterodimer binds the P700 chlorophyll special pair and subsequent electron acceptors. PSI consists of a core antenna complex that captures photons, and an electron transfer chain that converts photonic excitation into a charge separation. The eukaryotic PSI reaction center is composed of at least 11 subunits. P700 is a chlorophyll a/chlorophyll a' dimer, A0 is one or more chlorophyll a, A1 is one or both phylloquinones and FX is a shared 4Fe-4S iron-sulfur center. serves as cofactor.

The protein localises to the plastid. It is found in the chloroplast thylakoid membrane. The enzyme catalyses reduced [plastocyanin] + hnu + oxidized [2Fe-2S]-[ferredoxin] = oxidized [plastocyanin] + reduced [2Fe-2S]-[ferredoxin]. Its function is as follows. PsaA and PsaB bind P700, the primary electron donor of photosystem I (PSI), as well as the electron acceptors A0, A1 and FX. PSI is a plastocyanin/cytochrome c6-ferredoxin oxidoreductase, converting photonic excitation into a charge separation, which transfers an electron from the donor P700 chlorophyll pair to the spectroscopically characterized acceptors A0, A1, FX, FA and FB in turn. Oxidized P700 is reduced on the lumenal side of the thylakoid membrane by plastocyanin or cytochrome c6. The chain is Photosystem I P700 chlorophyll a apoprotein A1 from Thalassiosira pseudonana (Marine diatom).